Consider the following 385-residue polypeptide: Probable thioesterase PNKD (385 aa).

The span at 31-42 (NKASQNRSRALQ) shows a compositional bias: polar residues. A disordered region spans residues 31-57 (NKASQNRSRALQSHSSPECKEEPEPLS). Zn(2+) is bound by residues His-172, His-174, Asp-176, His-177, His-229, Asp-253, and His-291.

This sequence belongs to the metallo-beta-lactamase superfamily. Glyoxalase II family. It depends on Zn(2+) as a cofactor. Post-translationally, undergoes cleavage at the N-terminus.

The protein resides in the cell membrane. The protein localises to the mitochondrion. The enzyme catalyses a thioester + H2O = a thiol + a carboxylate + H(+). Its function is as follows. Probable thioesterase that may play a role in cellular detoxification processes; it likely acts on a yet-unknown alpha-hydroxythioester substrate. In vitro, it is able to catalyze the hydrolysis of S-D-lactoyl-glutathione to form glutathione and D-lactic acid at very low rate, though this reaction is not physiologically relevant in vivo. This chain is Probable thioesterase PNKD (PNKD), found in Bos taurus (Bovine).